Consider the following 290-residue polypeptide: TP53-target gene 5 protein (290 aa).

Residues 1 to 13 (MSPSAKKRPKNSR) show a composition bias toward basic residues. Disordered regions lie at residues 1 to 29 (MSPS…TEQP) and 114 to 178 (KLES…RQPL). 3 stretches are compositionally biased toward basic and acidic residues: residues 16-26 (KMQDEKLRDET), 114-130 (KLES…KEWK), and 138-167 (RNKE…RDDS).

Interacts with p53/TP53. Highly expressed in heart, brain and small intestine. Less abundant in skeletal muscle, spleen, prostate, ovary and colon. A smaller transcript is expressed specifically in the testis.

The protein resides in the cytoplasm. It localises to the nucleus. May play a significant role in p53/TP53-mediating signaling pathway. The chain is TP53-target gene 5 protein (TP53TG5) from Homo sapiens (Human).